Reading from the N-terminus, the 282-residue chain is PAK4-inhibitor INKA1 (282 aa).

2 disordered regions span residues 21–50 (RDTG…QFRA) and 92–127 (GFSE…FSVS). Inka box stretches follow at residues 163–200 (EAED…ELPE) and 256–282 (PADI…VSYL).

It belongs to the INKA family. As to quaternary structure, interacts with PAK4. As to expression, expressed in tissues of the developing head during neurulation.

Its subcellular location is the nucleus. It is found in the cytoplasm. Its function is as follows. Inhibitor of the serine/threonine-protein kinase PAK4. Acts by binding PAK4 in a substrate-like manner, inhibiting the protein kinase activity. This is PAK4-inhibitor INKA1 from Mus musculus (Mouse).